Consider the following 557-residue polypeptide: Dihydroxy-acid dehydratase (557 aa).

Cysteine 49 serves as a coordination point for [2Fe-2S] cluster. Aspartate 81 is a binding site for Mg(2+). [2Fe-2S] cluster is bound at residue cysteine 122. The Mg(2+) site is built by aspartate 123 and lysine 124. Lysine 124 carries the post-translational modification N6-carboxylysine. Cysteine 194 serves as a coordination point for [2Fe-2S] cluster. Glutamate 446 is a Mg(2+) binding site. The Proton acceptor role is filled by serine 472.

It belongs to the IlvD/Edd family. Homodimer. [2Fe-2S] cluster is required as a cofactor. Mg(2+) serves as cofactor.

The catalysed reaction is (2R)-2,3-dihydroxy-3-methylbutanoate = 3-methyl-2-oxobutanoate + H2O. It catalyses the reaction (2R,3R)-2,3-dihydroxy-3-methylpentanoate = (S)-3-methyl-2-oxopentanoate + H2O. It functions in the pathway amino-acid biosynthesis; L-isoleucine biosynthesis; L-isoleucine from 2-oxobutanoate: step 3/4. Its pathway is amino-acid biosynthesis; L-valine biosynthesis; L-valine from pyruvate: step 3/4. Functionally, functions in the biosynthesis of branched-chain amino acids. Catalyzes the dehydration of (2R,3R)-2,3-dihydroxy-3-methylpentanoate (2,3-dihydroxy-3-methylvalerate) into 2-oxo-3-methylpentanoate (2-oxo-3-methylvalerate) and of (2R)-2,3-dihydroxy-3-methylbutanoate (2,3-dihydroxyisovalerate) into 2-oxo-3-methylbutanoate (2-oxoisovalerate), the penultimate precursor to L-isoleucine and L-valine, respectively. This Prochlorococcus marinus (strain MIT 9312) protein is Dihydroxy-acid dehydratase.